Reading from the N-terminus, the 283-residue chain is tRNA-cytidine(32) 2-sulfurtransferase (283 aa).

Positions 49–54 (SGGKDS) match the PP-loop motif motif. Positions 124, 127, and 215 each coordinate [4Fe-4S] cluster.

Belongs to the TtcA family. In terms of assembly, homodimer. The cofactor is Mg(2+). It depends on [4Fe-4S] cluster as a cofactor.

The protein localises to the cytoplasm. It carries out the reaction cytidine(32) in tRNA + S-sulfanyl-L-cysteinyl-[cysteine desulfurase] + AH2 + ATP = 2-thiocytidine(32) in tRNA + L-cysteinyl-[cysteine desulfurase] + A + AMP + diphosphate + H(+). It functions in the pathway tRNA modification. Catalyzes the ATP-dependent 2-thiolation of cytidine in position 32 of tRNA, to form 2-thiocytidine (s(2)C32). The sulfur atoms are provided by the cysteine/cysteine desulfurase (IscS) system. The chain is tRNA-cytidine(32) 2-sulfurtransferase from Acaryochloris marina (strain MBIC 11017).